The primary structure comprises 61 residues: Large ribosomal subunit protein eL37 (61 aa).

Residues C20, C23, C35, and C38 each coordinate Zn(2+). A C4-type zinc finger spans residues 20-38 (CPRCGRHSYNIVKGYCAAC).

Belongs to the eukaryotic ribosomal protein eL37 family. Zn(2+) serves as cofactor.

Binds to the 23S rRNA. The polypeptide is Large ribosomal subunit protein eL37 (Caldivirga maquilingensis (strain ATCC 700844 / DSM 13496 / JCM 10307 / IC-167)).